Reading from the N-terminus, the 218-residue chain is MGTRDDEYDYLFKVVLIGDSGVGKSNLLSRFTRNEFNLESKSTIGVEFATRSIQVDGKTIKAQIWDTAGQERYRAITSAYYRGAVGALLVYDIAKHLTYENVERWLKELRDHADSNIVIMLVGNKSDLRHLRAVPTDEARAFAEKNNLSFIETSALDSTNVEEAFKNILTEIYRIVSQKQIADRAAHDESPGNNVVDISVPPTTDGQKPNKLQCCQNL.

Gly-2 is subject to N-acetylglycine. Position 4 is a citrulline (Arg-4). GTP is bound by residues Ser-20, Gly-21, Gly-23, Lys-24, Ser-25, Asn-26, Asn-37, Leu-38, Ser-40, Ser-42, and Thr-43. Position 25 (Ser-25) interacts with Mg(2+). The Switch 1 motif lies at 36–47 (FNLESKSTIGVE). Positions 43 and 66 each coordinate Mg(2+). A Switch 2 motif is present at residues 67–86 (TAGQERYRAITSAYYRGAVG). Positions 69, 124, 125, 127, 155, and 156 each coordinate GTP. The tract at residues 184–218 (RAAHDESPGNNVVDISVPPTTDGQKPNKLQCCQNL) is disordered. S-geranylgeranyl cysteine attachment occurs at residues Cys-214 and Cys-215. The residue at position 215 (Cys-215) is a Cysteine methyl ester. Residues 216–218 (QNL) constitute a propeptide, removed in mature form.

It belongs to the small GTPase superfamily. Rab family. As to quaternary structure, interacts with KCNMA1. Interacts with RAB11FIP1, RAB11FIP2, RAB11FIP3 and RAB11FIP4. May interact with TBC1D14. Interacts with ATP6V1E1. Interacts with PI4KB. Interacts (GDP-bound form) with ZFYVE27. Interacts (GDP-bound form) with KIF5A in a ZFYVE27-dependent manner. Interacts with RELCH. Interacts (in GTP-bound form) with TBC1D8B (via domain Rab-GAP TBC). Forms a complex containing RAB11B, ASAP1, Rabin8/RAB3IP, RAP11FIP3 and ARF4. Interacts with WDR44. The cofactor is Mg(2+). In terms of processing, citrullinated by PADI4. (Microbial infection) Glycosylated on arginine residues by S.typhimurium protein Ssek3.

It is found in the recycling endosome membrane. The protein localises to the cytoplasmic vesicle. The protein resides in the secretory vesicle. Its subcellular location is the synaptic vesicle membrane. It localises to the phagosome membrane. It carries out the reaction GTP + H2O = GDP + phosphate + H(+). With respect to regulation, regulated by guanine nucleotide exchange factors (GEFs) which promote the exchange of bound GDP for free GTP. Regulated by GTPase activating proteins (GAPs) which increase the GTP hydrolysis activity. Inhibited by GDP dissociation inhibitors (GDIs) which prevent Rab-GDP dissociation. The small GTPases Rab are key regulators of intracellular membrane trafficking, from the formation of transport vesicles to their fusion with membranes. Rabs cycle between an inactive GDP-bound form and an active GTP-bound form that is able to recruit to membranes different set of downstream effectors directly responsible for vesicle formation, movement, tethering and fusion. The small Rab GTPase RAB11B plays a role in endocytic recycling, regulating apical recycling of several transmembrane proteins including cystic fibrosis transmembrane conductance regulator/CFTR, epithelial sodium channel/ENaC, potassium voltage-gated channel, and voltage-dependent L-type calcium channel. May also regulate constitutive and regulated secretion, like insulin granule exocytosis. Required for melanosome transport and release from melanocytes. Also regulates V-ATPase intracellular transport in response to extracellular acidosis. Promotes Rabin8/RAB3IP preciliary vesicular trafficking to mother centriole by forming a ciliary targeting complex containing Rab11, ASAP1, Rabin8/RAB3IP, RAB11FIP3 and ARF4, thereby regulating ciliogenesis initiation. On the contrary, upon LPAR1 receptor signaling pathway activation, interaction with phosphorylated WDR44 prevents Rab11-RAB3IP-RAB11FIP3 complex formation and cilia growth. The protein is Ras-related protein Rab-11B of Homo sapiens (Human).